The sequence spans 344 residues: Inositol 2-dehydrogenase/D-chiro-inositol 3-dehydrogenase (344 aa).

This sequence belongs to the Gfo/Idh/MocA family. As to quaternary structure, homotetramer.

It catalyses the reaction myo-inositol + NAD(+) = scyllo-inosose + NADH + H(+). It carries out the reaction 1D-chiro-inositol + NAD(+) = scyllo-inosine + NADH + H(+). It participates in polyol metabolism; myo-inositol degradation into acetyl-CoA; acetyl-CoA from myo-inositol: step 1/7. Functionally, involved in the oxidation of myo-inositol (MI) and D-chiro-inositol (DCI) to 2-keto-myo-inositol (2KMI or 2-inosose) and 1-keto-D-chiro-inositol (1KDCI), respectively. Can also use D-glucose and D-xylose, and shows a trace of activity with D-ribose and D-fructose. The chain is Inositol 2-dehydrogenase/D-chiro-inositol 3-dehydrogenase (iolG) from Bacillus subtilis (strain 168).